The following is a 439-amino-acid chain: Ribosomal protein uS12 methylthiotransferase RimO (439 aa).

An MTTase N-terminal domain is found at proline 5–proline 115. Residues cysteine 14, cysteine 50, cysteine 79, cysteine 146, cysteine 150, and cysteine 153 each contribute to the [4Fe-4S] cluster site. The region spanning leucine 132–aspartate 369 is the Radical SAM core domain. In terms of domain architecture, TRAM spans glutamine 372 to aspartate 439.

Belongs to the methylthiotransferase family. RimO subfamily. [4Fe-4S] cluster is required as a cofactor.

The protein localises to the cytoplasm. The catalysed reaction is L-aspartate(89)-[ribosomal protein uS12]-hydrogen + (sulfur carrier)-SH + AH2 + 2 S-adenosyl-L-methionine = 3-methylsulfanyl-L-aspartate(89)-[ribosomal protein uS12]-hydrogen + (sulfur carrier)-H + 5'-deoxyadenosine + L-methionine + A + S-adenosyl-L-homocysteine + 2 H(+). Catalyzes the methylthiolation of an aspartic acid residue of ribosomal protein uS12. This chain is Ribosomal protein uS12 methylthiotransferase RimO, found in Francisella philomiragia subsp. philomiragia (strain ATCC 25017 / CCUG 19701 / FSC 153 / O#319-036).